The sequence spans 307 residues: Plasmodesmata-located protein 2 (307 aa).

The N-terminal stretch at 1 to 23 (MGLSISFLSIIMMMCLLFPDLNV) is a signal peptide. Residues 24 to 275 (VVKSATTEYT…STSTGATGKT (252 aa)) are Extracellular-facing. Gnk2-homologous domains follow at residues 33–136 (TTLI…VSGF) and 141–240 (GMEM…YYPN). 6 disulfides stabilise this stretch: C40-C114, C90-C99, C102-C127, C149-C218, C194-C203, and C206-C231. The segment covering 246 to 268 (SSSSSSSSSSSSSGSSNSDPSTS) has biased composition (low complexity). The interval 246–270 (SSSSSSSSSSSSSGSSNSDPSTSTG) is disordered. The helical transmembrane segment at 276–296 (VAIIVGGAAGVGFLVICLLFA) threads the bilayer. The segment at 276–296 (VAIIVGGAAGVGFLVICLLFA) is necessary and sufficient for plasmodesmal targeting. The Cytoplasmic segment spans residues 297-307 (KNLMRKKHDDY).

It belongs to the cysteine-rich repeat secretory protein family. Plasmodesmata-located proteins (PDLD) subfamily. As to quaternary structure, (Microbial infection) Interacts with Grapevine fanleaf virus (GFLV) 2B-MP. In terms of tissue distribution, highly expressed in inflorescence shoot apex. Uniformly expressed within the inflorescence meristem with the exception of a boundary zone between floral primordia and the meristem where the expression is weaker (at protein level).

It is found in the cell membrane. Its subcellular location is the cell junction. The protein resides in the plasmodesma. In terms of biological role, modulates cell-to-cell trafficking. The sequence is that of Plasmodesmata-located protein 2 from Arabidopsis thaliana (Mouse-ear cress).